The sequence spans 452 residues: MQFFGSLFVSLLGAAGLANALPSPGIPSNDKDLAIYPPVDANNTTSQDVVIDVVLFNGTEWISSRERFSLVSPGWASIYGPSGQSSVGSVLYSPILDYIDNAQLLVLDDVSFGVFSSLANSVTGYASNYTQSSSNSTSTMNSTGSVSGGSVYPTNSTTNSSISWNSSTSAATNTSSSSSSSSQSSVVSVNSEIFSYFGLSQQYVNYSTSRLCVVGTPRANMSTVSVTNNGSAVSNYTVNTNGWTSSNFKCVDDVVANIFGLDFYTAAVLSEVSILRSFALCNATTSSSLFRQIASYGVYGSFHFSSSESGSFANLIGTNNYFMTDVKSSSVVIVQSETSCSINSASMSSNTTYFYWNSTSSLSSSVFTNTTSSSNSTNSSIPTTYPSNSTTYQNITTSYPWSQPVVNITDYLSDNGDGHFVLAGDGNQTIGDFYVMNWTTIASGEYLVPFNY.

An N-terminal signal peptide occupies residues 1–20 (MQFFGSLFVSLLGAAGLANA). Residues 130–151 (TQSSSNSTSTMNSTGSVSGGSV) form a disordered region.

It is found in the endoplasmic reticulum. This is an uncharacterized protein from Schizosaccharomyces pombe (strain 972 / ATCC 24843) (Fission yeast).